Consider the following 447-residue polypeptide: Voltage-gated purine nucleotide uniporter SLC17A9 (447 aa).

The disordered stretch occupies residues 1 to 26 (MPSQRSSLMQPIPEETRKTPSAAAED). The span at 14 to 26 (EETRKTPSAAAED) shows a compositional bias: basic and acidic residues. The next 11 membrane-spanning stretches (helical) occupy residues 36-58 (LWTG…MPVC), 74-94 (GIVL…GGHL), 103-123 (VILL…LLAH), 129-149 (LAFV…YFPA), 169-189 (TVGA…SVLL), 197-217 (VFYF…KYLL), 252-272 (VWAV…LLSW), 287-307 (WVFN…SGFI), 327-347 (VMGL…TSFL), 380-400 (GFLF…GVCL), and 413-433 (CVFH…LVFG).

This sequence belongs to the major facilitator superfamily. Sodium/anion cotransporter family.

Its subcellular location is the cytoplasmic vesicle. It is found in the secretory vesicle. The protein localises to the chromaffin granule membrane. It localises to the secretory vesicle membrane. The protein resides in the lysosome membrane. The enzyme catalyses ATP(in) = ATP(out). It carries out the reaction ADP(in) = ADP(out). It catalyses the reaction GTP(in) = GTP(out). Activity is chloride-dependent. In terms of biological role, voltage-gated ATP nucleotide uniporter that can also transport the purine nucleotides ADP and GTP. Uses the membrane potential as the driving force to control ATP accumulation in lysosomes and secretory vesicles. By controlling ATP storage in lysosomes, regulates ATP-dependent proteins of these organelles. Also indirectly regulates the exocytosis of ATP through its import into lysosomes in astrocytes and secretory vesicles such as adrenal chromaffin granules, mucin granules and synaptic vesicles. This chain is Voltage-gated purine nucleotide uniporter SLC17A9, found in Rattus norvegicus (Rat).